The following is a 508-amino-acid chain: Photosystem II CP47 reaction center protein (508 aa).

6 consecutive transmembrane segments (helical) span residues serine 21–serine 36, isoleucine 101–tryptophan 115, glycine 140–phenylalanine 156, isoleucine 203–serine 218, valine 237–valine 252, and threonine 457–arginine 472.

Belongs to the PsbB/PsbC family. PsbB subfamily. As to quaternary structure, PSII is composed of 1 copy each of membrane proteins PsbA, PsbB, PsbC, PsbD, PsbE, PsbF, PsbH, PsbI, PsbJ, PsbK, PsbL, PsbM, PsbT, PsbX, PsbY, PsbZ, Psb30/Ycf12, at least 3 peripheral proteins of the oxygen-evolving complex and a large number of cofactors. It forms dimeric complexes. Binds multiple chlorophylls. PSII binds additional chlorophylls, carotenoids and specific lipids. serves as cofactor.

Its subcellular location is the plastid. The protein localises to the chloroplast thylakoid membrane. Functionally, one of the components of the core complex of photosystem II (PSII). It binds chlorophyll and helps catalyze the primary light-induced photochemical processes of PSII. PSII is a light-driven water:plastoquinone oxidoreductase, using light energy to abstract electrons from H(2)O, generating O(2) and a proton gradient subsequently used for ATP formation. The protein is Photosystem II CP47 reaction center protein of Angiopteris evecta (Mule's foot fern).